Consider the following 223-residue polypeptide: Germin-like protein subfamily 1 member 10 (223 aa).

Residues 1-24 (MAMKSLSFLAALSLLALTLPLTIA) form the signal peptide. A disulfide bridge connects residues C34 and C51. A glycan (N-linked (GlcNAc...) asparagine) is linked at N38. Residues 65 to 215 (PGLQTARPIT…AFQVDPRVVM (151 aa)) form the Cupin type-1 domain. Residues H113, H115, E120, and H161 each coordinate Mn(2+).

The protein belongs to the germin family. Oligomer (believed to be a pentamer but probably hexamer).

It localises to the secreted. The protein resides in the extracellular space. The protein localises to the apoplast. Its function is as follows. May play a role in plant defense. Probably has no oxalate oxidase activity even if the active site is conserved. This is Germin-like protein subfamily 1 member 10 from Arabidopsis thaliana (Mouse-ear cress).